A 776-amino-acid chain; its full sequence is Protein phosphatase 1 regulatory subunit 21 (776 aa).

Coiled-coil stretches lie at residues 4–206 (GDLQ…LKTL), 432–466 (RLHD…TTND), and 555–597 (ESRE…KETL).

In terms of assembly, component of the FERRY complex.

The protein resides in the early endosome. In terms of biological role, component of the FERRY complex (Five-subunit Endosomal Rab5 and RNA/ribosome intermediary). The FERRY complex directly interacts with mRNAs and RAB5A, and functions as a RAB5A effector involved in the localization and the distribution of specific mRNAs most likely by mediating their endosomal transport. The complex recruits mRNAs and ribosomes to early endosomes through direct mRNA-interaction. Putative regulator of protein phosphatase 1 (PP1) activity. May play a role in the endosomal sorting process or in endosome maturation pathway. This chain is Protein phosphatase 1 regulatory subunit 21 (ppp1r21), found in Xenopus laevis (African clawed frog).